Reading from the N-terminus, the 225-residue chain is ATP-dependent dethiobiotin synthetase BioD (225 aa).

12 to 17 (EVGKTY) is a binding site for ATP. Thr16 provides a ligand contact to Mg(2+). Lys37 is an active-site residue. Ser41 contributes to the substrate binding site. ATP is bound by residues Asp52, 114 to 117 (EGAG), and 174 to 175 (NC). Mg(2+) contacts are provided by Asp52 and Glu114.

This sequence belongs to the dethiobiotin synthetase family. Homodimer. It depends on Mg(2+) as a cofactor.

The protein localises to the cytoplasm. The enzyme catalyses (7R,8S)-7,8-diammoniononanoate + CO2 + ATP = (4R,5S)-dethiobiotin + ADP + phosphate + 3 H(+). Its pathway is cofactor biosynthesis; biotin biosynthesis; biotin from 7,8-diaminononanoate: step 1/2. Functionally, catalyzes a mechanistically unusual reaction, the ATP-dependent insertion of CO2 between the N7 and N8 nitrogen atoms of 7,8-diaminopelargonic acid (DAPA, also called 7,8-diammoniononanoate) to form a ureido ring. The polypeptide is ATP-dependent dethiobiotin synthetase BioD (Francisella tularensis subsp. mediasiatica (strain FSC147)).